Consider the following 354-residue polypeptide: D-alanine--D-alanine ligase (354 aa).

An ATP-grasp domain is found at 154 to 348 (RSWFLTNNIN…FTNLIEEIIK (195 aa)). Residue 181–232 (MKRPYVIKPITQGSSIGIEVIFEEDDFNFANYDFPYGDQVIIEKYIKGRELQ) participates in ATP binding. Mg(2+) is bound by residues Glu301, Glu315, and Asn317.

The protein belongs to the D-alanine--D-alanine ligase family. Mg(2+) serves as cofactor. The cofactor is Mn(2+).

The protein resides in the cytoplasm. The enzyme catalyses 2 D-alanine + ATP = D-alanyl-D-alanine + ADP + phosphate + H(+). It participates in cell wall biogenesis; peptidoglycan biosynthesis. In terms of biological role, cell wall formation. This chain is D-alanine--D-alanine ligase, found in Rickettsia canadensis (strain McKiel).